Reading from the N-terminus, the 258-residue chain is Type III pantothenate kinase (258 aa).

Position 6 to 13 (6 to 13) interacts with ATP; sequence DVGNTNTV. Substrate contacts are provided by residues Tyr-100 and 107–110; that span reads GADR. Asp-109 functions as the Proton acceptor in the catalytic mechanism. Asp-129 is a K(+) binding site. Thr-132 serves as a coordination point for ATP. Thr-184 provides a ligand contact to substrate.

Belongs to the type III pantothenate kinase family. Homodimer. NH4(+) serves as cofactor. It depends on K(+) as a cofactor.

It is found in the cytoplasm. It catalyses the reaction (R)-pantothenate + ATP = (R)-4'-phosphopantothenate + ADP + H(+). Its pathway is cofactor biosynthesis; coenzyme A biosynthesis; CoA from (R)-pantothenate: step 1/5. Catalyzes the phosphorylation of pantothenate (Pan), the first step in CoA biosynthesis. This chain is Type III pantothenate kinase, found in Bacillus velezensis (strain DSM 23117 / BGSC 10A6 / LMG 26770 / FZB42) (Bacillus amyloliquefaciens subsp. plantarum).